Consider the following 730-residue polypeptide: Transcription factor verF (730 aa).

The C2H2-type 1 zinc-finger motif lies at 19–41 (YECSLCLKRYKRREHLFRHIGSH). The segment at 47–69 (YQCNSCDGAFQRADVLKRHLRTC) adopts a C2H2-type 2; atypical zinc-finger fold. Residues 83-109 (CDRCVRQKKACSSHQPCHSCAKKGAQC) constitute a DNA-binding region (zn(2)-C6 fungal-type). The segment covering 120-129 (RLSQHSSTNH) has biased composition (polar residues). Residues 120–151 (RLSQHSSTNHTPKDQELSTQFTNPPPPPSTST) form a disordered region.

It is found in the nucleus. In terms of biological role, transcription factor; part of the gene cluster that mediates the biosynthesis of the neurotoxin verrucosidin, a methylated alpha-pyrone polyketide that inhibits oxidative phosphorylation in mitochondria and thereby causes neurological diseases. In Penicillium polonicum, this protein is Transcription factor verF.